Here is a 431-residue protein sequence, read N- to C-terminus: Extensin-3 (431 aa).

An N-terminal signal peptide occupies residues 1–27 (MGSPMASLVATLLVLTISLTFVSQSTA). 3 consecutive repeat copies span residues 33–41 (SPPPPVKHY), 49–55 (SPPPVYH), and 56–63 (SPPPPKKH). Positions 33–384 (SPPPPVKHYT…KSPPPPVKHY (352 aa)) are 13 X 9 AA repeats of S-P-P-P-P-V-K-H-Y. The segment at 42–408 (TPPVKHYSPP…KYVYKSPPPP (367 aa)) is disordered. The segment covering 49–59 (SPPPVYHSPPP) has biased composition (pro residues). Residues 49–391 (SPPPVYHSPP…KHYSPPPVYH (343 aa)) are 13 X 7 AA repeats of S-P-P-P-V-Y-H. Positions 56–371 (SPPPPKKHYE…YHSPPPPKKH (316 aa)) are 12 X 8 AA repeats of S-P-P-P-P-K-K-H. Residues 64 to 67 (YEYK) form an isodityrosine cross-linking region. 3 consecutive repeat copies span residues 68–76 (SPPPPVKHY), 77–83 (SPPPVYH), and 84–91 (SPPPPKKH). Over residues 68-87 (SPPPPVKHYSPPPVYHSPPP) the composition is skewed to pro residues. The isodityrosine cross-linking stretch occupies residues 92-95 (YVYK). 3 tandem repeats follow at residues 96–104 (SPPPPVKHY), 105–111 (SPPPVYH), and 112–119 (SPPPPKKH). Residues 96-115 (SPPPPVKHYSPPPVYHSPPP) show a composition bias toward pro residues. Residues 120 to 123 (YVYK) are isodityrosine cross-linking. 3 repeat units span residues 124 to 132 (SPPPPVKHY), 133 to 139 (SPPPVYH), and 140 to 147 (SPPPPKKH). Over residues 124–143 (SPPPPVKHYSPPPVYHSPPP) the composition is skewed to pro residues. Positions 148–151 (YVYK) are isodityrosine cross-linking. Tandem repeats lie at residues 152–160 (SPPPPVKHY), 161–167 (SPPPVYH), and 168–175 (SPPPPKKH). Pro residues predominate over residues 152–171 (SPPPPVKHYSPPPVYHSPPP). Residues 176-179 (YVYK) are isodityrosine cross-linking. 3 tandem repeats follow at residues 180-188 (SPPPPVKHY), 189-195 (SPPPVYH), and 196-203 (SPPPPKKH). Pro residues predominate over residues 180–199 (SPPPPVKHYSPPPVYHSPPP). An isodityrosine cross-linking region spans residues 204–207 (YVYK). Tandem repeats lie at residues 208–216 (SPPPPVKHY), 217–223 (SPPPVYH), and 224–231 (SPPPPKKH). The segment covering 208-227 (SPPPPVKHYSPPPVYHSPPP) has biased composition (pro residues). The segment at 232 to 235 (YVYK) is isodityrosine cross-linking. A run of 3 repeats spans residues 236-244 (SPPPPVKHY), 245-251 (SPPPVYH), and 252-259 (SPPPPKKH). The span at 236–255 (SPPPPVKHYSPPPVYHSPPP) shows a compositional bias: pro residues. Residues 260-263 (YVYK) are isodityrosine cross-linking. 3 repeat units span residues 264-272 (SPPPPVKHY), 273-279 (SPPPVYH), and 280-287 (SPPPPKKH). Pro residues predominate over residues 264–283 (SPPPPVKHYSPPPVYHSPPP). An isodityrosine cross-linking region spans residues 288 to 291 (YVYK). 3 consecutive repeat copies span residues 292–300 (SPPPPVKHY), 301–307 (SPPPVYH), and 308–315 (SPPPPKKH). The span at 292-311 (SPPPPVKHYSPPPVYHSPPP) shows a compositional bias: pro residues. Residues 316 to 319 (YVYK) form an isodityrosine cross-linking region. 3 tandem repeats follow at residues 320–328 (SPPPPVKHY), 329–335 (SPPPVYH), and 336–343 (SPPPPKKH). Over residues 320 to 339 (SPPPPVKHYSPPPVYHSPPP) the composition is skewed to pro residues. Positions 344–347 (YVYK) are isodityrosine cross-linking. Tandem repeats lie at residues 348-356 (SPPPPVKHY), 357-363 (SPPPVYH), and 364-371 (SPPPPKKH). Positions 348–367 (SPPPPVKHYSPPPVYHSPPP) are enriched in pro residues. Residues 372–375 (YVYK) form an isodityrosine cross-linking region. A run of 2 repeats spans residues 376–384 (SPPPPVKHY) and 385–391 (SPPPVYH). Positions 376 to 395 (SPPPPVKHYSPPPVYHSPPP) are enriched in pro residues. Isodityrosine cross-linking stretches follow at residues 400 to 403 (YVYK) and 420 to 423 (YLYK).

It belongs to the extensin family. Post-translationally, the proline residues of the Ser-Pro(3) repeats are hydroxylated and then O-glycosylated (arabinosylation) by HPAT1, HPAT2 and HPAT3. Around 20% of Hyp units are in the nonglycosylated form. The Ser residues are O-galactosylated. The lack of Ser-O-galactosylation does not affect Hyp-O-arabinosylation, but both types of O-glycosylation are central for the functionality of the protein. Correct Hyp-O-arabinosylation appears to be responsible for generating a bend on the EXT3 backbone around a YVY motif, which may represent a better scenario for Tyr intramolecular cross-links (isodityrosine type). In terms of processing, synthetised as soluble proteins which become insolubilised in the cell wall through the intermolecular cross-linking of Tyr on adjacent monomers. Isodityrosine (IDT) stabilizes and makes rigid the part of the polypeptide where IDT functional sites are present. Predominantly expressed in the roots.

The protein localises to the secreted. Its subcellular location is the primary cell wall. Functionally, structural component which strengthens the primary cell wall. Forms dendritic structures indicating a propensity for self-assembly through tyrosine cross-linking. Forms intermolecular cross-links exclusively by pulcherosine (three Tyr). Scaffold formation requires an unobstructed C-terminus of EXT3. Required for the correct positioning of the cell plate during cytokinesis in cells of the developing embryo. Extensins contain a characteristic repeat of the pentapeptide Ser-Pro(4). For this particular extensin, a typical repeat of Ser-Pro(3) is found. The chain is Extensin-3 from Arabidopsis thaliana (Mouse-ear cress).